A 442-amino-acid chain; its full sequence is Chromosomal replication initiator protein DnaA (442 aa).

Residues 1-75 (MDAWPRCLER…GNGEVALAVG (75 aa)) are domain I, interacts with DnaA modulators. The tract at residues 75–104 (GSRPRAPEPLPAPQAVASAPAAAPIVPFAG) is domain II. The domain III, AAA+ region stretch occupies residues 105–322 (NLDSHYTFAN…GALNTLVARA (218 aa)). ATP-binding residues include glycine 150, glycine 152, lysine 153, and threonine 154. Residues 323–442 (NFTGRSITVE…WEKLIRKLSE (120 aa)) form a domain IV, binds dsDNA region.

The protein belongs to the DnaA family. In terms of assembly, oligomerizes as a right-handed, spiral filament on DNA at oriC.

It is found in the cytoplasm. Its function is as follows. Plays an essential role in the initiation and regulation of chromosomal replication. ATP-DnaA binds to the origin of replication (oriC) to initiate formation of the DNA replication initiation complex once per cell cycle. Binds the DnaA box (a 9 base pair repeat at the origin) and separates the double-stranded (ds)DNA. Forms a right-handed helical filament on oriC DNA; dsDNA binds to the exterior of the filament while single-stranded (ss)DNA is stabiized in the filament's interior. The ATP-DnaA-oriC complex binds and stabilizes one strand of the AT-rich DNA unwinding element (DUE), permitting loading of DNA polymerase. After initiation quickly degrades to an ADP-DnaA complex that is not apt for DNA replication. Binds acidic phospholipids. The protein is Chromosomal replication initiator protein DnaA of Xanthomonas campestris pv. campestris (strain B100).